The chain runs to 372 residues: Lipoyl synthase (372 aa).

7 residues coordinate [4Fe-4S] cluster: cysteine 37, cysteine 42, cysteine 48, cysteine 63, cysteine 67, cysteine 70, and serine 292. Residues 49-281 enclose the Radical SAM core domain; the sequence is WREGTATVML…ERAALEMGFL (233 aa). Residues 338-372 are disordered; that stretch reads LTAELDPDEPRPPVAPAPASASPARLVPAASLIRR. The span at 354–372 shows a compositional bias: low complexity; the sequence is APASASPARLVPAASLIRR.

The protein belongs to the radical SAM superfamily. Lipoyl synthase family. Requires [4Fe-4S] cluster as cofactor.

The protein localises to the cytoplasm. It carries out the reaction [[Fe-S] cluster scaffold protein carrying a second [4Fe-4S](2+) cluster] + N(6)-octanoyl-L-lysyl-[protein] + 2 oxidized [2Fe-2S]-[ferredoxin] + 2 S-adenosyl-L-methionine + 4 H(+) = [[Fe-S] cluster scaffold protein] + N(6)-[(R)-dihydrolipoyl]-L-lysyl-[protein] + 4 Fe(3+) + 2 hydrogen sulfide + 2 5'-deoxyadenosine + 2 L-methionine + 2 reduced [2Fe-2S]-[ferredoxin]. It functions in the pathway protein modification; protein lipoylation via endogenous pathway; protein N(6)-(lipoyl)lysine from octanoyl-[acyl-carrier-protein]: step 2/2. Functionally, catalyzes the radical-mediated insertion of two sulfur atoms into the C-6 and C-8 positions of the octanoyl moiety bound to the lipoyl domains of lipoate-dependent enzymes, thereby converting the octanoylated domains into lipoylated derivatives. The protein is Lipoyl synthase of Sorangium cellulosum (strain So ce56) (Polyangium cellulosum (strain So ce56)).